We begin with the raw amino-acid sequence, 598 residues long: Beta-fructofuranosidase, insoluble isoenzyme 2 (598 aa).

A signal peptide spans 1–25 (MGVLGSRVAWAWLVQLLLLQQLAGA). D69 is a catalytic residue. N-linked (GlcNAc...) asparagine glycans are attached at residues N164, N189, and N348.

This sequence belongs to the glycosyl hydrolase 32 family.

The protein localises to the secreted. Its subcellular location is the extracellular space. The protein resides in the apoplast. It localises to the cell wall. It catalyses the reaction Hydrolysis of terminal non-reducing beta-D-fructofuranoside residues in beta-D-fructofuranosides.. Functionally, may play a role in sucrose partitioning during seed development. This Oryza sativa subsp. indica (Rice) protein is Beta-fructofuranosidase, insoluble isoenzyme 2 (CIN2).